Reading from the N-terminus, the 346-residue chain is 3-dehydroquinate synthase (346 aa).

Residues 61–66 (DGEAYK), 95–99 (GVIGD), 119–120 (TT), Lys132, and Lys141 contribute to the NAD(+) site. Residues Glu174, His233, and His250 each contribute to the Zn(2+) site.

The protein belongs to the sugar phosphate cyclases superfamily. Dehydroquinate synthase family. Requires NAD(+) as cofactor. Co(2+) serves as cofactor. It depends on Zn(2+) as a cofactor.

It localises to the cytoplasm. The catalysed reaction is 7-phospho-2-dehydro-3-deoxy-D-arabino-heptonate = 3-dehydroquinate + phosphate. It participates in metabolic intermediate biosynthesis; chorismate biosynthesis; chorismate from D-erythrose 4-phosphate and phosphoenolpyruvate: step 2/7. Its function is as follows. Catalyzes the conversion of 3-deoxy-D-arabino-heptulosonate 7-phosphate (DAHP) to dehydroquinate (DHQ). The polypeptide is 3-dehydroquinate synthase (Wolinella succinogenes (strain ATCC 29543 / DSM 1740 / CCUG 13145 / JCM 31913 / LMG 7466 / NCTC 11488 / FDC 602W) (Vibrio succinogenes)).